A 146-amino-acid chain; its full sequence is MLAGAGRPGLPQGRHLCWLLCAFTLKLCQAEAPVQEEKLSASTSNLPCWLVEEFVVAEECSPCSNFRAKTTPECGPTGYVEKITCSSSKRNEFKSCRSALMEQRLFWKFEGAVVCVALIFACLVIIRQRQLDRKALEKVRKQIESI.

An N-terminal signal peptide occupies residues 1–30 (MLAGAGRPGLPQGRHLCWLLCAFTLKLCQA). Topologically, residues 31 to 105 (EAPVQEEKLS…CRSALMEQRL (75 aa)) are extracellular. Residues 106 to 126 (FWKFEGAVVCVALIFACLVII) form a helical membrane-spanning segment. At 127–146 (RQRQLDRKALEKVRKQIESI) the chain is on the cytoplasmic side.

Belongs to the JTB family. In terms of assembly, interacts with AURKA, AURKB, BIRC5 and INCENP. May be a component of the CPC at least composed of BIRC5/survivin, CDCA8/borealin, INCENP and AURKB/Aurora-B. As to expression, ubiquitous. Expressed in all normal human tissues studied but overexpressed or underexpressed in many of their malignant counterparts.

The protein localises to the membrane. It localises to the mitochondrion. It is found in the cytoplasm. Its subcellular location is the cytoskeleton. The protein resides in the microtubule organizing center. The protein localises to the centrosome. It localises to the spindle. Its function is as follows. Required for normal cytokinesis during mitosis. Plays a role in the regulation of cell proliferation. May be a component of the chromosomal passenger complex (CPC), a complex that acts as a key regulator of mitosis. The CPC complex has essential functions at the centromere in ensuring correct chromosome alignment and segregation and is required for chromatin-induced microtubule stabilization and spindle assembly. Increases AURKB activity. Inhibits apoptosis induced by TGFB1. Overexpression induces swelling of mitochondria and reduces mitochondrial membrane potential. The sequence is that of Protein JTB (JTB) from Homo sapiens (Human).